The following is a 303-amino-acid chain: Protoheme IX farnesyltransferase (303 aa).

Transmembrane regions (helical) follow at residues 25-45 (MGLV…AVVM), 54-74 (IPQI…ACAL), 104-124 (LLLL…LLNI), 125-145 (PSGV…SIWS), 151-171 (WNTV…WVAI), 179-199 (AIAL…ALAI), 227-247 (FIWL…GVVF), 248-268 (VVLA…TFKK), and 280-300 (FIYS…VSLL).

Belongs to the UbiA prenyltransferase family. Protoheme IX farnesyltransferase subfamily. As to quaternary structure, interacts with CtaA.

It localises to the cell membrane. The catalysed reaction is heme b + (2E,6E)-farnesyl diphosphate + H2O = Fe(II)-heme o + diphosphate. It functions in the pathway porphyrin-containing compound metabolism; heme O biosynthesis; heme O from protoheme: step 1/1. Converts heme B (protoheme IX) to heme O by substitution of the vinyl group on carbon 2 of heme B porphyrin ring with a hydroxyethyl farnesyl side group. This chain is Protoheme IX farnesyltransferase, found in Staphylococcus aureus (strain Mu3 / ATCC 700698).